The primary structure comprises 156 residues: Sensor histidine kinase component HK2 (156 aa).

Residues 1–42 lie on the Extracellular side of the membrane; that stretch reads MALVLAAAGAVTVVQFRDAAHEADPDGALRGLTDDITADLVR. A helical membrane pass occupies residues 43–63; sequence ELVTILPIVLVIAAVAAYLLS. An HAMP domain is found at 64-120; sequence RAALRPVDRIRAAAQTLTTTPHPDTDAPLPVPPTDDEIAWLATTLNTMLTRLQRALA. Over 64–156 the chain is Cytoplasmic; sequence RAALRPVDRI…RCAGPDPPTS (93 aa). The Histidine kinase; first part domain maps to 128–156; it reads DASHELRTPLALLTTELELRCAGPDPPTS. H131 is modified (phosphohistidine; by autocatalysis).

As to quaternary structure, homodimer. Each monomer interacts with HK1 and the receiver domain of TcrA. Phosphorylated by HK1.

It is found in the cell membrane. The enzyme catalyses ATP + protein L-histidine = ADP + protein N-phospho-L-histidine.. Member of the three-protein two-component system HK1/HK2/TcrA. HK2 transfers its phosphoryl group to TcrA. The sequence is that of Sensor histidine kinase component HK2 from Mycobacterium tuberculosis (strain ATCC 25618 / H37Rv).